Here is a 74-residue protein sequence, read N- to C-terminus: Exodeoxyribonuclease 7 small subunit (74 aa).

The protein belongs to the XseB family. As to quaternary structure, heterooligomer composed of large and small subunits.

It is found in the cytoplasm. The enzyme catalyses Exonucleolytic cleavage in either 5'- to 3'- or 3'- to 5'-direction to yield nucleoside 5'-phosphates.. Bidirectionally degrades single-stranded DNA into large acid-insoluble oligonucleotides, which are then degraded further into small acid-soluble oligonucleotides. The chain is Exodeoxyribonuclease 7 small subunit from Haemophilus ducreyi (strain 35000HP / ATCC 700724).